The chain runs to 183 residues: Capsid protein (183 aa).

Positions 136-183 are disordered; the sequence is NAPILSTLPETTVVRRRGRSPRRRTPSPRRRRSQSPRRRRSQSRESQC. Positions 149 to 176 are enriched in basic residues; it reads VRRRGRSPRRRTPSPRRRRSQSPRRRRS. Ser155, Ser162, and Ser170 each carry phosphoserine; by host. A 1; half-length repeat occupies 155-161; it reads SPRRRTP. Positions 155 to 177 are 3 X 8 AA repeats of S-P-R-R-R-[PR]-S-Q; sequence SPRRRTPSPRRRRSQSPRRRRSQ. The Bipartite nuclear localization signal signature appears at 158–175; the sequence is RRTPSPRRRRSQSPRRRR. A run of 2 repeats spans residues 162-169 and 170-177. Positions 177–183 are RNA binding; it reads QSRESQC.

This sequence belongs to the orthohepadnavirus core antigen family. As to quaternary structure, homodimerizes, then multimerizes. Interacts with cytosol exposed regions of viral L glycoprotein present in the reticulum-to-Golgi compartment. Interacts with human FLNB. Phosphorylated form interacts with host importin alpha; this interaction depends on the exposure of the NLS, which itself depends upon genome maturation and/or phosphorylation of the capsid protein. Interacts with host NUP153. Phosphorylated by host SRPK1, SRPK2, and maybe protein kinase C or GAPDH. Phosphorylation is critical for pregenomic RNA packaging. Protein kinase C phosphorylation is stimulated by HBx protein and may play a role in transport of the viral genome to the nucleus at the late step during the viral replication cycle.

It localises to the virion. It is found in the host cytoplasm. Self assembles to form an icosahedral capsid. Most capsids appear to be large particles with an icosahedral symmetry of T=4 and consist of 240 copies of capsid protein, though a fraction forms smaller T=3 particles consisting of 180 capsid proteins. Entering capsids are transported along microtubules to the nucleus. Phosphorylation of the capsid is thought to induce exposure of nuclear localization signal in the C-terminal portion of the capsid protein that allows binding to the nuclear pore complex via the importin (karyopherin-) alpha and beta. Capsids are imported in intact form through the nuclear pore into the nuclear basket, where it probably binds NUP153. Only capsids that contain the mature viral genome can release the viral DNA and capsid protein into the nucleoplasm. Immature capsids get stuck in the basket. Capsids encapsulate the pre-genomic RNA and the P protein. Pre-genomic RNA is reverse-transcribed into DNA while the capsid is still in the cytoplasm. The capsid can then either be directed to the nucleus, providing more genomes for transcription, or bud through the endoplasmic reticulum to provide new virions. This is Capsid protein from Homo sapiens (Human).